A 429-amino-acid chain; its full sequence is Ribosomal RNA small subunit methyltransferase B (429 aa).

Residues Cys-254–Lys-260, Asp-277, Asp-303, and Asp-322 contribute to the S-adenosyl-L-methionine site. Cys-375 serves as the catalytic Nucleophile.

This sequence belongs to the class I-like SAM-binding methyltransferase superfamily. RsmB/NOP family.

Its subcellular location is the cytoplasm. It catalyses the reaction cytidine(967) in 16S rRNA + S-adenosyl-L-methionine = 5-methylcytidine(967) in 16S rRNA + S-adenosyl-L-homocysteine + H(+). Functionally, specifically methylates the cytosine at position 967 (m5C967) of 16S rRNA. This chain is Ribosomal RNA small subunit methyltransferase B, found in Shigella flexneri.